Consider the following 413-residue polypeptide: Cardiolipin synthase B (413 aa).

2 PLD phosphodiesterase domains span residues 108–135 (VFRR…SAEH) and 285–312 (RRRP…DPLS). Active-site residues include His113, Lys115, Asp120, His290, Lys292, and Asp297. The disordered stretch occupies residues 390-413 (VGPPAQPTMETQDRVETENTGVKP).

This sequence belongs to the phospholipase D family. Cardiolipin synthase subfamily. ClsB sub-subfamily.

The protein localises to the cell membrane. The enzyme catalyses 2 a 1,2-diacyl-sn-glycero-3-phospho-(1'-sn-glycerol) = a cardiolipin + glycerol. Its function is as follows. Catalyzes the phosphatidyl group transfer from one phosphatidylglycerol molecule to another to form cardiolipin (CL) (diphosphatidylglycerol) and glycerol. This is Cardiolipin synthase B from Escherichia coli O6:H1 (strain CFT073 / ATCC 700928 / UPEC).